Reading from the N-terminus, the 476-residue chain is GTPase Der (476 aa).

EngA-type G domains lie at 3–167 and 205–380; these read FTVA…GEDM and LRVA…KTWN. Residues 9–16, 56–60, 119–122, 211–218, 258–262, and 323–326 contribute to the GTP site; these read GRPNVGKS, DTAGL, NKSE, GRPNAGKS, DTAGM, and NKWD. Positions 381–465 constitute a KH-like domain; that stretch reads RRISTAKLNR…PIRVHYRGSD (85 aa).

This sequence belongs to the TRAFAC class TrmE-Era-EngA-EngB-Septin-like GTPase superfamily. EngA (Der) GTPase family. In terms of assembly, associates with the 50S ribosomal subunit.

Its function is as follows. GTPase that plays an essential role in the late steps of ribosome biogenesis. This is GTPase Der from Agrobacterium fabrum (strain C58 / ATCC 33970) (Agrobacterium tumefaciens (strain C58)).